The sequence spans 138 residues: Basic phospholipase A2 DsM-b1/DsM-b1' (138 aa).

The signal sequence occupies residues 1–16; sequence MRTLWIVAMCLIGVEG. 7 cysteine pairs are disulfide-bonded: Cys42-Cys131, Cys44-Cys60, Cys59-Cys111, Cys65-Cys138, Cys66-Cys104, Cys73-Cys97, and Cys91-Cys102. Residues Tyr43, Gly45, and Gly47 each coordinate Ca(2+). His63 is a catalytic residue. Ca(2+) is bound at residue Asp64. Residue Asp105 is part of the active site.

Requires Ca(2+) as cofactor. Expressed by the venom gland.

The protein resides in the secreted. It catalyses the reaction a 1,2-diacyl-sn-glycero-3-phosphocholine + H2O = a 1-acyl-sn-glycero-3-phosphocholine + a fatty acid + H(+). Functionally, exhibits high hydrolytic activities and shows strong preference for the anionic micelles (dPPC with deoxycholate) to the zwitterionic micelles (dPPC with Triton X-100). PLA2 catalyzes the calcium-dependent hydrolysis of the 2-acyl groups in 3-sn-phosphoglycerides. This is Basic phospholipase A2 DsM-b1/DsM-b1' from Daboia siamensis (Eastern Russel's viper).